Here is a 179-residue protein sequence, read N- to C-terminus: Large ribosomal subunit protein uL5 (179 aa).

Belongs to the universal ribosomal protein uL5 family. As to quaternary structure, part of the 50S ribosomal subunit; part of the 5S rRNA/L5/L18/L25 subcomplex. Contacts the 5S rRNA and the P site tRNA. Forms a bridge to the 30S subunit in the 70S ribosome.

Functionally, this is one of the proteins that bind and probably mediate the attachment of the 5S RNA into the large ribosomal subunit, where it forms part of the central protuberance. In the 70S ribosome it contacts protein S13 of the 30S subunit (bridge B1b), connecting the 2 subunits; this bridge is implicated in subunit movement. Contacts the P site tRNA; the 5S rRNA and some of its associated proteins might help stabilize positioning of ribosome-bound tRNAs. The chain is Large ribosomal subunit protein uL5 from Exiguobacterium sibiricum (strain DSM 17290 / CCUG 55495 / CIP 109462 / JCM 13490 / 255-15).